The primary structure comprises 426 residues: Spermatogenesis-associated protein 2-like protein (426 aa).

4 disordered regions span residues 204 to 223, 234 to 256, 269 to 300, and 316 to 347; these read AQDE…TYGA, DESS…PVEL, LWGS…EELE, and SRSG…ASSA. Ser-318 and Ser-326 each carry phosphoserine.

This sequence belongs to the SPATA2 family.

The protein is Spermatogenesis-associated protein 2-like protein of Mus musculus (Mouse).